The following is a 48-amino-acid chain: Delta-stichotoxin-Hcr1a (48 aa).

Disulfide bonds link Cys3-Cys43, Cys5-Cys33, and Cys26-Cys44. A Lysine amide; partial; in Delta-stichotoxin-Hcr1f modification is found at Lys48.

This sequence belongs to the sea anemone sodium channel inhibitory toxin family. Type II subfamily. In terms of assembly, probably composed of two peptide chains of 12 and 35 residues connected by two disulfide bonds (Cys-3-Cys-43 and Cys-5-Cys-33). Post-translationally, delta-SHTX-Hcr1f (RTX-VI) may be the result of post-translational modification of delta-SHTX-Hcr1a (RTX-III), which would consist of Arg-13 cleavage.

The protein resides in the secreted. Its subcellular location is the nematocyst. Its function is as follows. Binds to site 3 of voltage-gated sodium channels and inhibits the inactivation process. Specifically inhibits mammalian Nav1.3/SCN3A and Nav1.6/SCN8A sodium channels, as well as insect BgNav1 and VdNav1 sodium channels. In terms of biological role, binds to site 3 of voltage-gated sodium channels and inhibits the inactivation process. Specifically inhibits mammalian Nav1.2/SCN3A (low inhibition) and Nav1.6/SCN8A sodium channels, as well as insect BgNav1 and VdNav1 sodium channels. This chain is Delta-stichotoxin-Hcr1a, found in Radianthus crispa (Leathery sea anemone).